Reading from the N-terminus, the 210-residue chain is Prolactin-2 (210 aa).

A signal peptide spans 1–23 (MARRSQGTKLHLAVLCLVVSCHA). Intrachain disulfides connect cysteine 69–cysteine 183 and cysteine 200–cysteine 210.

Belongs to the somatotropin/prolactin family.

Its subcellular location is the secreted. The protein is Prolactin-2 (prl2) of Oncorhynchus keta (Chum salmon).